We begin with the raw amino-acid sequence, 279 residues long: uncharacterized protein (279 aa).

This is an uncharacterized protein from Acanthamoeba polyphaga (Amoeba).